A 745-amino-acid polypeptide reads, in one-letter code: ATP-dependent zinc metalloprotease FtsH (745 aa).

The Cytoplasmic segment spans residues 1–11 (MNNRRNGLFRN). A helical membrane pass occupies residues 12–32 (SLFYILMFLSLMGIIYFFFGG). Topologically, residues 33-131 (NSGSQTQNIR…VTAKAEESSG (99 aa)) are extracellular. A helical membrane pass occupies residues 132–152 (IWVTLLMYIAPVILMLFLFYM). Residues 153-745 (MMGQAGQGGG…SSQDDTNSQA (593 aa)) are Cytoplasmic-facing. 227–234 (GPPGTGKT) contacts ATP. Residue H449 coordinates Zn(2+). The active site involves E450. Zn(2+)-binding residues include H453 and D525. The span at 630–673 (MPEKDSNEFPSEKAATFEESKRELERREAEKHAQNQSADDKQAD) shows a compositional bias: basic and acidic residues. Residues 630 to 745 (MPEKDSNEFP…SSQDDTNSQA (116 aa)) are disordered. The span at 690–704 (SESDASSEVSADSSV) shows a compositional bias: low complexity. Residues 705–745 (NSTANSATESATDSDVATSATGLPNAESATPSSQDDTNSQA) show a composition bias toward polar residues.

In the central section; belongs to the AAA ATPase family. The protein in the C-terminal section; belongs to the peptidase M41 family. As to quaternary structure, homohexamer. Zn(2+) is required as a cofactor.

Its subcellular location is the cell membrane. Functionally, acts as a processive, ATP-dependent zinc metallopeptidase for both cytoplasmic and membrane proteins. Plays a role in the quality control of integral membrane proteins. The polypeptide is ATP-dependent zinc metalloprotease FtsH (Lactiplantibacillus plantarum (strain ATCC BAA-793 / NCIMB 8826 / WCFS1) (Lactobacillus plantarum)).